The following is a 331-amino-acid chain: Laforin (331 aa).

Residues 1 to 124 (MLFRFGVVVP…NNLVDGVYCL (124 aa)) enclose the CBM20 domain. The residue at position 25 (S25) is a Phosphoserine; by AMPK. Residues W32, K87, 103 to 107 (GPHHD), D197, D235, and R241 contribute to the substrate site. The region spanning 156 to 323 (HYSRILPNIW…QQDFFQKFGK (168 aa)) is the Tyrosine-protein phosphatase domain. The active-site Phosphocysteine intermediate is C266. The short motif at 266 to 272 (CNAGVGR) is the Glucan phosphatase signature motif CXAGXGR element. Substrate-binding positions include 267-272 (NAGVGR) and Y304.

The protein belongs to the protein-tyrosine phosphatase family. Homodimer. Interacts with itself. Interacts with PPP1R3B, PPP1R3C, PPP1R3D, HIRIP5, and EPM2AIP1. Binds glycogen and Lafora bodies. Interacts with NHLRC1/malin (via the NHL repeats). Forms a complex with NHLRC1/malin and HSP70. Interacts with PPP1R3D; in the presence of NHLC1/malin the interaction leads to ubiquitination and autophagic degradation of PPP1R3D. Interacts (via the phosphatase domain) with MAPT/Tau; the interaction dephosphorylates MAPT. Interacts with PRDM8. Polyubiquitinated by NHLRC1/malin. In terms of processing, phosphorylation on Ser-25 by AMPK affects the phosphatase activity of the enzyme and its ability to homodimerize and interact with NHLRC1, PPP1R3C or PRKAA2. Widely expressed.

Its subcellular location is the cytoplasm. The protein resides in the endoplasmic reticulum membrane. It is found in the cell membrane. The catalysed reaction is O-phospho-L-tyrosyl-[protein] + H2O = L-tyrosyl-[protein] + phosphate. The enzyme catalyses O-phospho-L-seryl-[protein] + H2O = L-seryl-[protein] + phosphate. It catalyses the reaction O-phospho-L-threonyl-[protein] + H2O = L-threonyl-[protein] + phosphate. Functionally, plays an important role in preventing glycogen hyperphosphorylation and the formation of insoluble aggregates, via its activity as glycogen phosphatase, and by promoting the ubiquitination of proteins involved in glycogen metabolism via its interaction with the E3 ubiquitin ligase NHLRC1/malin. Dephosphorylates phosphotyrosine and synthetic substrates, such as para-nitrophenylphosphate (pNPP), and has low activity with phosphoserine and phosphothreonine substrates (in vitro). Has also been shown to dephosphorylate MAPT. Shows strong phosphatase activity towards complex carbohydrates in vitro, avoiding glycogen hyperphosphorylation which is associated with reduced branching and formation of insoluble aggregates. Forms a complex with NHLRC1/malin and HSP70, which suppresses the cellular toxicity of misfolded proteins by promoting their degradation through the ubiquitin-proteasome system (UPS). Acts as a scaffold protein to facilitate PPP1R3C/PTG ubiquitination by NHLRC1/malin. Also promotes proteasome-independent protein degradation through the macroautophagy pathway. This Rattus norvegicus (Rat) protein is Laforin (Epm2a).